A 43-amino-acid chain; its full sequence is Potassium channel toxin gamma-KTx 4.12 (43 aa).

4 disulfides stabilise this stretch: cysteine 5–cysteine 23, cysteine 11–cysteine 34, cysteine 20–cysteine 39, and cysteine 24–cysteine 41.

Expressed by the venom gland.

Its subcellular location is the secreted. Functionally, reversibly blocks Kv11/ERG potassium channels. Is less toxic than ergtoxin (AC Q86QT3). This is Potassium channel toxin gamma-KTx 4.12 from Centruroides sculpturatus (Arizona bark scorpion).